Consider the following 277-residue polypeptide: Phosphatidylglycerol--prolipoprotein diacylglyceryl transferase (277 aa).

Transmembrane regions (helical) follow at residues 18–38 (ISVK…LLLA), 51–71 (IIVD…RIYY), 89–109 (IWHG…TAVI), and 116–136 (ISFW…QAIG). Arginine 137 provides a ligand contact to a 1,2-diacyl-sn-glycero-3-phospho-(1'-sn-glycerol). 3 consecutive transmembrane segments (helical) span residues 177 to 197 (QPTF…LLII), 205 to 225 (GELF…IEGM), and 235 to 255 (FRVS…LIIY).

The protein belongs to the Lgt family.

The protein localises to the cell membrane. It catalyses the reaction L-cysteinyl-[prolipoprotein] + a 1,2-diacyl-sn-glycero-3-phospho-(1'-sn-glycerol) = an S-1,2-diacyl-sn-glyceryl-L-cysteinyl-[prolipoprotein] + sn-glycerol 1-phosphate + H(+). It functions in the pathway protein modification; lipoprotein biosynthesis (diacylglyceryl transfer). Catalyzes the transfer of the diacylglyceryl group from phosphatidylglycerol to the sulfhydryl group of the N-terminal cysteine of a prolipoprotein, the first step in the formation of mature lipoproteins. The chain is Phosphatidylglycerol--prolipoprotein diacylglyceryl transferase from Listeria innocua serovar 6a (strain ATCC BAA-680 / CLIP 11262).